Reading from the N-terminus, the 78-residue chain is HssA/B-like protein 30 (78 aa).

The disordered stretch occupies residues 1 to 32 (MTLFSSITSISKTNTSSKSSVNSLSGSSLSMG).

The protein belongs to the hssA/B family.

The sequence is that of HssA/B-like protein 30 (hssl30) from Dictyostelium discoideum (Social amoeba).